The following is a 229-amino-acid chain: MAEHRTKPSELDQGKCDADDNVKIICLGDSAVGKSKLMERFLMDGFQPQQLSTYALTLYKHTATVDGKTILVDFWDTAGQERFQSMHASYYHKAHACIMVFDVQRKVTYKNLSAWYTELREFRPEIPCLVVANKIDADINVTQKSFNFAKKFSLPLYFVSAADGTNVVKLFNDAIRLAVSYKQNSQDFMDEILQELENFNLEQEEEDVPDQEQSGSIETPSEEVASPHS.

Residues 28–35 (GDSAVGKS), 76–80 (DTAGQ), and 133–136 (NKID) each bind GTP. Residues 200–229 (NLEQEEEDVPDQEQSGSIETPSEEVASPHS) are disordered.

Belongs to the small GTPase superfamily. Rab family. In terms of assembly, interacts with IFT27, IFT81, IFT172, ATP6V1E1, HK1, LDHC, MAPRE1 and HSPA2.

In terms of biological role, plays an essential role in male fertility, sperm intra-flagellar transport, and tail assembly. Binds, in a GTP-regulated manner, to a specific set of effector proteins including key proteins involved in cilia development and function and delivers them into the growing sperm tail. This chain is Rab-like protein 2A (RABL2A), found in Pongo abelii (Sumatran orangutan).